Reading from the N-terminus, the 220-residue chain is MELLTQLLQALWAQDFETLANPSMIGMLYFVLFVILFLENGLLPAAFLPGDSLLVLVGVLIAKGAMGYPQTILLLTVAASLGCWVSYIQGRWLGNTRTVQNWLSHLPAHYHQRAHHLFHKHGLSALLIGRFIAFVRTLLPTIAGLSGLNNARFQFFNWMSGLLWVLILTTLGYMLGKTPVFLKYEDQLMSCLMLLPVVLLVFGLAGSLVVLWKKKYGNRG.

Topologically, residues 1 to 27 are periplasmic; that stretch reads MELLTQLLQALWAQDFETLANPSMIGM. The chain crosses the membrane as a helical span at residues 28–48; that stretch reads LYFVLFVILFLENGLLPAAFL. Residues 49–52 are Cytoplasmic-facing; that stretch reads PGDS. The next 2 membrane-spanning stretches (helical) occupy residues 53-73 and 74-94; these read LLVL…QTIL and LLTV…RWLG. At 95–154 the chain is on the cytoplasmic side; the sequence is NTRTVQNWLSHLPAHYHQRAHHLFHKHGLSALLIGRFIAFVRTLLPTIAGLSGLNNARFQ. The chain crosses the membrane as a helical span at residues 155-175; that stretch reads FFNWMSGLLWVLILTTLGYML. Over 176-191 the chain is Periplasmic; that stretch reads GKTPVFLKYEDQLMSC. Residues 192–212 form a helical membrane-spanning segment; it reads LMLLPVVLLVFGLAGSLVVLW. The Cytoplasmic portion of the chain corresponds to 213–220; the sequence is KKKYGNRG.

This sequence belongs to the DedA family.

The protein resides in the cell inner membrane. Functionally, may be a membrane transporter required for proton motive force (PMF)-dependent drug efflux. Required, with YghB, for the proper export of certain periplasmic amidases and, possibly, other Tat substrates. May play a role in determining membrane lipid composition. This Escherichia coli (strain K12) protein is Inner membrane protein YqjA (yqjA).